The sequence spans 492 residues: Tyrosine--tRNA ligase, mitochondrial (492 aa).

Tyr89 serves as a coordination point for L-tyrosine. Asp93 lines the ATP pocket. The 'HIGH' region motif lies at 94-103; the sequence is PTAQSLHLGN. L-tyrosine is bound by residues Asp133, Tyr239, Gln243, Asp246, and Gln265. The 'KMSKS' region motif lies at 303-307; that stretch reads KFGKS. Residue Lys306 coordinates ATP.

The protein belongs to the class-I aminoacyl-tRNA synthetase family. Homodimer.

The protein resides in the mitochondrion matrix. It carries out the reaction tRNA(Tyr) + L-tyrosine + ATP = L-tyrosyl-tRNA(Tyr) + AMP + diphosphate + H(+). Catalyzes the attachment of tyrosine to tRNA(Tyr) in a two-step reaction: tyrosine is first activated by ATP to form Tyr-AMP and then transferred to the acceptor end of tRNA(Tyr). The polypeptide is Tyrosine--tRNA ligase, mitochondrial (MSY1) (Saccharomyces cerevisiae (strain ATCC 204508 / S288c) (Baker's yeast)).